We begin with the raw amino-acid sequence, 622 residues long: Protein translocase subunit SecD (622 aa).

The next 6 helical transmembrane spans lie at 6 to 26 (FKIG…YPTV), 460 to 480 (AGLR…IFYY), 485 to 505 (MIAD…LAAF), 512 to 532 (PGIA…VLIF), 559 to 579 (AIFD…SFGV), and 584 to 604 (GFAV…IVIT).

This sequence belongs to the SecD/SecF family. SecD subfamily. In terms of assembly, forms a complex with SecF. Part of the essential Sec protein translocation apparatus which comprises SecA, SecYEG and auxiliary proteins SecDF. Other proteins may also be involved.

Its subcellular location is the cell inner membrane. Its function is as follows. Part of the Sec protein translocase complex. Interacts with the SecYEG preprotein conducting channel. SecDF uses the proton motive force (PMF) to complete protein translocation after the ATP-dependent function of SecA. This chain is Protein translocase subunit SecD, found in Rhodothermus marinus (strain ATCC 43812 / DSM 4252 / R-10) (Rhodothermus obamensis).